The sequence spans 356 residues: Cyanide hydratase (356 aa).

Residues 15-290 (FKVAAVQAEP…EVVLYANISL (276 aa)) enclose the CN hydrolase domain. Catalysis depends on Glu-55, which acts as the Proton acceptor. Lys-137 is a catalytic residue. Catalysis depends on Cys-172, which acts as the Nucleophile. Residues 331-356 (DEQAASKAQQAEIDNAGKGSIVPSKL) form a disordered region.

This sequence belongs to the carbon-nitrogen hydrolase superfamily. Nitrilase family.

The catalysed reaction is formamide = hydrogen cyanide + H2O. Functionally, catalyzes the hydration of cyanide to formamide. Degradation of cyanide may be important for plant pathogenic fungi in infection of cyanogenic plants. The sequence is that of Cyanide hydratase from Armillaria gallica (Bulbous honey fungus).